Reading from the N-terminus, the 126-residue chain is Histone H2B type 1-L (126 aa).

The segment covering 1-12 (MPELAKSAPAPK) has biased composition (low complexity). The segment at 1–36 (MPELAKSAPAPKKGSKKAVTKAQKKDGKKRKRSRKE) is disordered. N-acetylproline is present on proline 2. Glutamate 3 is modified (ADP-ribosyl glutamic acid). Lysine 6 bears the N6-(2-hydroxyisobutyryl)lysine; alternate mark. At lysine 6 the chain carries N6-(beta-hydroxybutyryl)lysine; alternate. Residue lysine 6 is modified to N6-acetyllysine; alternate. Lysine 6 is subject to N6-butyryllysine; alternate. Lysine 6 bears the N6-crotonyllysine; alternate mark. Lysine 6 bears the N6-lactoyllysine; alternate mark. Residue lysine 6 forms a Glycyl lysine isopeptide (Lys-Gly) (interchain with G-Cter in SUMO2); alternate linkage. Serine 7 carries the post-translational modification ADP-ribosylserine. Lysine 12 carries the post-translational modification N6-(beta-hydroxybutyryl)lysine; alternate. 2 positions are modified to N6-acetyllysine; alternate: lysine 12 and lysine 13. N6-crotonyllysine; alternate occurs at positions 12 and 13. Lysine 12 is modified (N6-lactoyllysine; alternate). Lysine 13 carries the post-translational modification N6-(2-hydroxyisobutyryl)lysine; alternate. A Phosphoserine; by STK4/MST1 modification is found at serine 15. N6-acetyllysine; alternate is present on residues lysine 16, lysine 17, lysine 21, and lysine 24. 4 positions are modified to N6-crotonyllysine; alternate: lysine 16, lysine 17, lysine 21, and lysine 24. Residues lysine 16, lysine 17, lysine 21, and lysine 24 each carry the N6-lactoyllysine; alternate modification. Lysine 17 and lysine 21 each carry N6-(beta-hydroxybutyryl)lysine; alternate. The residue at position 17 (lysine 17) is an N6-glutaryllysine; alternate. Lysine 21 and lysine 24 each carry N6-(2-hydroxyisobutyryl)lysine; alternate. Lysine 21 is modified (N6-butyryllysine; alternate). Lysine 21 participates in a covalent cross-link: Glycyl lysine isopeptide (Lys-Gly) (interchain with G-Cter in SUMO2); alternate. Lysine 25 is subject to N6-(2-hydroxyisobutyryl)lysine. Lysine 35 carries the N6-(2-hydroxyisobutyryl)lysine; alternate modification. The residue at position 35 (lysine 35) is an N6-(beta-hydroxybutyryl)lysine; alternate. Lysine 35 is modified (N6-crotonyllysine; alternate). Lysine 35 bears the N6-glutaryllysine; alternate mark. At lysine 35 the chain carries N6-succinyllysine; alternate. Residue lysine 35 forms a Glycyl lysine isopeptide (Lys-Gly) (interchain with G-Cter in ubiquitin); alternate linkage. Glutamate 36 is subject to PolyADP-ribosyl glutamic acid. Residue serine 37 is modified to Phosphoserine; by AMPK. N6-(2-hydroxyisobutyryl)lysine; alternate occurs at positions 44, 47, and 58. Lysine 44 carries the post-translational modification N6-lactoyllysine; alternate. Residues lysine 44 and lysine 47 each carry the N6-glutaryllysine; alternate modification. At lysine 47 the chain carries N6-methyllysine; alternate. At lysine 58 the chain carries N6,N6-dimethyllysine; alternate. Dimethylated arginine is present on arginine 80. The residue at position 86 (lysine 86) is an N6-(2-hydroxyisobutyryl)lysine; alternate. Lysine 86 carries the N6-(beta-hydroxybutyryl)lysine; alternate modification. Position 86 is an N6-acetyllysine; alternate (lysine 86). Lysine 86 carries the post-translational modification N6-lactoyllysine; alternate. Lysine 86 is modified (N6,N6,N6-trimethyllysine; alternate). Residues arginine 87 and arginine 93 each carry the omega-N-methylarginine modification. Lysine 109 carries the N6-(2-hydroxyisobutyryl)lysine; alternate modification. Residue lysine 109 is modified to N6-lactoyllysine; alternate. Lysine 109 carries the post-translational modification N6-glutaryllysine; alternate. Residue lysine 109 is modified to N6-methyllysine; alternate. O-linked (GlcNAc) serine glycosylation occurs at serine 113. A Phosphothreonine modification is found at threonine 116. Residues lysine 117 and lysine 121 each carry the N6-(2-hydroxyisobutyryl)lysine; alternate modification. Residues lysine 117 and lysine 121 each carry the N6-(beta-hydroxybutyryl)lysine; alternate modification. N6-lactoyllysine; alternate occurs at positions 117 and 121. Lysine 117 and lysine 121 each carry N6-glutaryllysine; alternate. N6-succinyllysine; alternate is present on residues lysine 117 and lysine 121. Lysine 117 carries the post-translational modification N6-malonyllysine; alternate. At lysine 117 the chain carries N6-methylated lysine; alternate. Lysine 121 participates in a covalent cross-link: Glycyl lysine isopeptide (Lys-Gly) (interchain with G-Cter in ubiquitin); alternate.

It belongs to the histone H2B family. In terms of assembly, the nucleosome is a histone octamer containing two molecules each of H2A, H2B, H3 and H4 assembled in one H3-H4 heterotetramer and two H2A-H2B heterodimers. The octamer wraps approximately 147 bp of DNA. In terms of processing, monoubiquitination at Lys-35 (H2BK34Ub) by the MSL1/MSL2 dimer is required for histone H3 'Lys-4' (H3K4me) and 'Lys-79' (H3K79me) methylation and transcription activation at specific gene loci, such as HOXA9 and MEIS1 loci. Similarly, monoubiquitination at Lys-121 (H2BK120Ub) by the RNF20/40 complex gives a specific tag for epigenetic transcriptional activation and is also prerequisite for histone H3 'Lys-4' and 'Lys-79' methylation. It also functions cooperatively with the FACT dimer to stimulate elongation by RNA polymerase II. H2BK120Ub also acts as a regulator of mRNA splicing: deubiquitination by USP49 is required for efficient cotranscriptional splicing of a large set of exons. Phosphorylation at Ser-37 (H2BS36ph) by AMPK in response to stress promotes transcription. Phosphorylated on Ser-15 (H2BS14ph) by STK4/MST1 during apoptosis; which facilitates apoptotic chromatin condensation. Also phosphorylated on Ser-15 in response to DNA double strand breaks (DSBs), and in correlation with somatic hypermutation and immunoglobulin class-switch recombination. Post-translationally, glcNAcylation at Ser-113 promotes monoubiquitination of Lys-121. It fluctuates in response to extracellular glucose, and associates with transcribed genes. In terms of processing, ADP-ribosylated by PARP1 or PARP2 on Ser-7 (H2BS6ADPr) in response to DNA damage. H2BS6ADPr promotes recruitment of CHD1L. Mono-ADP-ribosylated on Glu-3 (H2BE2ADPr) by PARP3 in response to single-strand breaks. Poly ADP-ribosylation on Glu-36 (H2BE35ADPr) by PARP1 regulates adipogenesis: it inhibits phosphorylation at Ser-37 (H2BS36ph), thereby blocking expression of pro-adipogenetic genes. Crotonylation (Kcr) is specifically present in male germ cells and marks testis-specific genes in post-meiotic cells, including X-linked genes that escape sex chromosome inactivation in haploid cells. Crotonylation marks active promoters and enhancers and confers resistance to transcriptional repressors. It is also associated with post-meiotically activated genes on autosomes. Post-translationally, lactylated in macrophages by EP300/P300 by using lactoyl-CoA directly derived from endogenous or exogenous lactate, leading to stimulates gene transcription.

The protein localises to the nucleus. Its subcellular location is the chromosome. Its function is as follows. Core component of nucleosome. Nucleosomes wrap and compact DNA into chromatin, limiting DNA accessibility to the cellular machineries which require DNA as a template. Histones thereby play a central role in transcription regulation, DNA repair, DNA replication and chromosomal stability. DNA accessibility is regulated via a complex set of post-translational modifications of histones, also called histone code, and nucleosome remodeling. The chain is Histone H2B type 1-L from Homo sapiens (Human).